We begin with the raw amino-acid sequence, 130 residues long: Small ribosomal subunit protein uS8 (130 aa).

Belongs to the universal ribosomal protein uS8 family. In terms of assembly, part of the 30S ribosomal subunit. Contacts proteins S5 and S12.

In terms of biological role, one of the primary rRNA binding proteins, it binds directly to 16S rRNA central domain where it helps coordinate assembly of the platform of the 30S subunit. This chain is Small ribosomal subunit protein uS8, found in Teredinibacter turnerae (strain ATCC 39867 / T7901).